Consider the following 340-residue polypeptide: Adenine deaminase (340 aa).

His-17, His-19, and His-197 together coordinate Zn(2+). Glu-200 acts as the Proton donor in catalysis. Asp-278 contacts Zn(2+). Asp-279 lines the substrate pocket.

The protein belongs to the metallo-dependent hydrolases superfamily. Adenosine and AMP deaminases family. Adenine deaminase type 2 subfamily. Zn(2+) is required as a cofactor.

It catalyses the reaction adenine + H2O + H(+) = hypoxanthine + NH4(+). Catalyzes the hydrolytic deamination of adenine to hypoxanthine. Plays an important role in the purine salvage pathway and in nitrogen catabolism. This Streptomyces coelicolor (strain ATCC BAA-471 / A3(2) / M145) protein is Adenine deaminase.